A 442-amino-acid chain; its full sequence is MLGNLGRSLSKTMKKLAGMTIVDEEVVREVIKDIQRALIQSDVNIKLVFNLSKSIEERALNEEPPKGITPKEHIISIVYDEMVKLLGEKSHELVIDDKPYRILFLGLQGSGKTTTIGKLARYLRKKGFTVGVVCTDTWRPAALEQLKQYTEGQDVSIYGDPQNRDALDLAEKGLARFQKKDVIIFDTAGRHKEEKDLLREMEELSAIVEPHEAILVIDGTIGQQAREQALAFRKATDIGSIIVTKLDGSAKGGGALSAVAEIGAPIKFIGTGERIDDLEVFDPERFISRLLGMGDLRSLLEKVEEVSEEEIAEESLDAILSGKFTLRDMRVQFEMMGKMGPLQQVMSMLPGAGKLPKDASRMTEETIRKYLIIMDSMTEEELEKPDIIKHSRIRRIARGSGTRNEDVKELLKYYRVTKKAMKGLGRRKMGGPMGQLMRQFMR.

GTP is bound by residues 106-113 (GLQGSGKT), 186-190 (DTAGR), and 244-247 (TKLD).

It belongs to the GTP-binding SRP family. SRP54 subfamily. Part of the signal recognition particle protein translocation system, which is composed of SRP and FtsY. Archaeal SRP consists of a 7S RNA molecule of 300 nucleotides and two protein subunits: SRP54 and SRP19.

It localises to the cytoplasm. It carries out the reaction GTP + H2O = GDP + phosphate + H(+). Functionally, involved in targeting and insertion of nascent membrane proteins into the cytoplasmic membrane. Binds to the hydrophobic signal sequence of the ribosome-nascent chain (RNC) as it emerges from the ribosomes. The SRP-RNC complex is then targeted to the cytoplasmic membrane where it interacts with the SRP receptor FtsY. The chain is Signal recognition particle 54 kDa protein from Methanothermobacter thermautotrophicus (strain ATCC 29096 / DSM 1053 / JCM 10044 / NBRC 100330 / Delta H) (Methanobacterium thermoautotrophicum).